The primary structure comprises 277 residues: Putative thiosulfate sulfurtransferase (277 aa).

2 consecutive Rhodanese domains span residues 18–125 and 154–274; these read DSAN…PLST and SIKI…VPIE. C233 (cysteine persulfide intermediate) is an active-site residue. R238 is a substrate binding site.

It catalyses the reaction thiosulfate + hydrogen cyanide = thiocyanate + sulfite + 2 H(+). Its function is as follows. May be a sulfotransferase involved in the formation of thiosulfate. The polypeptide is Putative thiosulfate sulfurtransferase (cysA) (Mycobacterium leprae (strain TN)).